Consider the following 309-residue polypeptide: Cytochrome c biogenesis protein CcsA (309 aa).

8 helical membrane passes run 18–38, 43–63, 67–87, 102–122, 148–168, 216–236, 250–267, and 279–299; these read LGLL…GAFF, FFIV…QLLF, ISGH…TWGI, IIPS…CFVL, VMLS…VLFI, SILI…VWAN, TWAF…HMRI, and LATT…FLGI.

Belongs to the CcmF/CycK/Ccl1/NrfE/CcsA family. As to quaternary structure, may interact with ccs1.

It is found in the cellular thylakoid membrane. Required during biogenesis of c-type cytochromes (cytochrome c6 and cytochrome f) at the step of heme attachment. This is Cytochrome c biogenesis protein CcsA from Prochlorococcus marinus (strain MIT 9215).